The sequence spans 324 residues: Malate dehydrogenase (324 aa).

NAD(+) is bound by residues 21 to 26 (GAGRVG) and aspartate 45. Positions 94 and 100 each coordinate substrate. NAD(+) contacts are provided by residues asparagine 107 and 130–132 (VTN). Residues asparagine 132 and arginine 163 each contribute to the substrate site. Histidine 187 acts as the Proton acceptor in catalysis.

The protein belongs to the LDH/MDH superfamily. MDH type 3 family.

It carries out the reaction (S)-malate + NAD(+) = oxaloacetate + NADH + H(+). Its function is as follows. Catalyzes the reversible oxidation of malate to oxaloacetate. The polypeptide is Malate dehydrogenase (Trichormus variabilis (strain ATCC 29413 / PCC 7937) (Anabaena variabilis)).